We begin with the raw amino-acid sequence, 1333 residues long: DNA-directed RNA polymerase subunit beta' (1333 aa).

4 residues coordinate Zn(2+): Cys-60, Cys-62, Cys-75, and Cys-78. Mg(2+) contacts are provided by Asp-535, Asp-537, and Asp-539. Zn(2+) contacts are provided by Cys-901, Cys-983, Cys-990, and Cys-993.

It belongs to the RNA polymerase beta' chain family. As to quaternary structure, the RNAP catalytic core consists of 2 alpha, 1 beta, 1 beta' and 1 omega subunit. When a sigma factor is associated with the core the holoenzyme is formed, which can initiate transcription. Mg(2+) is required as a cofactor. It depends on Zn(2+) as a cofactor.

It carries out the reaction RNA(n) + a ribonucleoside 5'-triphosphate = RNA(n+1) + diphosphate. Functionally, DNA-dependent RNA polymerase catalyzes the transcription of DNA into RNA using the four ribonucleoside triphosphates as substrates. This Corynebacterium glutamicum (strain R) protein is DNA-directed RNA polymerase subunit beta'.